Consider the following 124-residue polypeptide: Small ribosomal subunit protein uS12 (124 aa).

Residues 1-23 are disordered; that stretch reads MATINQLVRKPRKRPVAKSDVPA. At aspartate 89 the chain carries 3-methylthioaspartic acid. A disordered region spans residues 101–124; that stretch reads ALDTSGVQNRRQGRSKYGTKRPKS. Positions 111 to 124 are enriched in basic residues; the sequence is RQGRSKYGTKRPKS.

Belongs to the universal ribosomal protein uS12 family. In terms of assembly, part of the 30S ribosomal subunit. Contacts proteins S8 and S17. May interact with IF1 in the 30S initiation complex.

Its function is as follows. With S4 and S5 plays an important role in translational accuracy. Interacts with and stabilizes bases of the 16S rRNA that are involved in tRNA selection in the A site and with the mRNA backbone. Located at the interface of the 30S and 50S subunits, it traverses the body of the 30S subunit contacting proteins on the other side and probably holding the rRNA structure together. The combined cluster of proteins S8, S12 and S17 appears to hold together the shoulder and platform of the 30S subunit. This chain is Small ribosomal subunit protein uS12, found in Chromohalobacter salexigens (strain ATCC BAA-138 / DSM 3043 / CIP 106854 / NCIMB 13768 / 1H11).